The sequence spans 91 residues: UPF0512 protein M (91 aa).

It belongs to the UPF0512 family.

This Dictyostelium discoideum (Social amoeba) protein is UPF0512 protein M.